The following is a 703-amino-acid chain: Protein O-mannosyl-transferase TMEM260 (703 aa).

Helical transmembrane passes span 20–40 (GALR…TLTL), 68–88 (PLFT…SVAY), 90–110 (VNLL…YTVF), 137–157 (IAAE…ALTV), 182–202 (SLCN…WILF), 218–238 (LTLA…SSYL), 314–334 (KSSV…FFAW), and 352–372 (FWLQ…ATLV). 2 N-linked (GlcNAc...) asparagine glycosylation sites follow: asparagine 403 and asparagine 564.

It belongs to the glycosyltransferase 117 (GT117) family.

The protein resides in the endoplasmic reticulum membrane. The enzyme catalyses a di-trans,poly-cis-dolichyl beta-D-mannosyl phosphate + L-seryl-[protein] = 3-O-(alpha-D-mannosyl)-L-seryl-[protein] + a di-trans,poly-cis-dolichyl phosphate + H(+). It carries out the reaction a di-trans,poly-cis-dolichyl beta-D-mannosyl phosphate + L-threonyl-[protein] = 3-O-(alpha-D-mannosyl)-L-threonyl-[protein] + a di-trans,poly-cis-dolichyl phosphate + H(+). In terms of biological role, O-mannosyl-transferase that transfers mannosyl residues to the hydroxyl group of serine or threonine residues of proteins. Specifically glycosylates the IPT/TIG domain of target proteins, such as MET and MST1R/RON. TMEM260-mediated O-mannosylated residues are composed of single mannose glycans that are not elongated or modified. This is Protein O-mannosyl-transferase TMEM260 from Mus musculus (Mouse).